The chain runs to 287 residues: Glutamate racemase (287 aa).

Residues 1–15 show a composition bias toward polar residues; sequence MATKPQDANTTSREA. Residues 1–25 form a disordered region; it reads MATKPQDANTTSREAITSKADSPPR. Substrate-binding positions include 32-33 and 64-65; these read DS and YG. Catalysis depends on Cys-96, which acts as the Proton donor/acceptor. Residue 97–98 participates in substrate binding; it reads NT. Catalysis depends on Cys-208, which acts as the Proton donor/acceptor. 209–210 lines the substrate pocket; the sequence is TH.

This sequence belongs to the aspartate/glutamate racemases family.

The enzyme catalyses L-glutamate = D-glutamate. The protein operates within cell wall biogenesis; peptidoglycan biosynthesis. Functionally, provides the (R)-glutamate required for cell wall biosynthesis. The sequence is that of Glutamate racemase from Yersinia pseudotuberculosis serotype I (strain IP32953).